The primary structure comprises 300 residues: Forkhead transcription factor fkh-9 (300 aa).

The fork-head DNA-binding region spans arginine 66 to arginine 161. The segment at lysine 153–proline 208 is disordered. The segment covering lysine 169–glycine 183 has biased composition (basic and acidic residues). Residues serine 187–serine 198 show a composition bias toward low complexity.

In terms of tissue distribution, expressed in mechanosensory neurons.

It localises to the nucleus. Its function is as follows. Transcription factor. Binds to the regulatory elements of genes that contain the sequence motif 5'-TTGTTTCT-3'. Involved in regulating intestinal transcription of vitellogenin vit-2, acting in concert with transcription factors elt-2, mab-3 and daf-16, and also the TGF-beta/Sma/Mab pathway. Functions downstream of the insulin/IGF-1-like signaling (IIS) mediated pathway, in regeneration of axons after injury and in short-term memory, perhaps acting in neurons, and in modulation of longevity, perhaps acting non-neuronally. Plays a role in the modulation of endoplasmic reticulum (ER) homeostasis during chemical and pathogen stress, including exposure to the Gram-negative bacterium P.aeruginosa. The sequence is that of Forkhead transcription factor fkh-9 from Caenorhabditis elegans.